Here is a 371-residue protein sequence, read N- to C-terminus: Cytochrome b (371 aa).

The next 4 membrane-spanning stretches (helical) occupy residues 25–45, 69–90, 105–125, and 170–190; these read FGSMLLTCLMLQVLTGFFLAV, WLMQNLHAIGASMFFICIYIHI, WMSGITLLITLIATAFFGYVL, and FFALHFILPFAIISLSSLHII. Residues His-75 and His-89 each coordinate heme b. Positions 174 and 188 each coordinate heme b. His-193 is a binding site for a ubiquinone. 4 helical membrane passes run 218-238, 280-300, 312-332, and 339-358; these read YKDLLLLTLMLLTLMITVSFF, LGGALALVMSIMILLTAPLTH, LSQLMFWTLISTFITITWAAT, and YIIISQTTATLYFTFFISTP.

This sequence belongs to the cytochrome b family. As to quaternary structure, the cytochrome bc1 complex contains 3 respiratory subunits (MT-CYB, CYC1 and UQCRFS1), 2 core proteins (UQCRC1 and UQCRC2) and probably 6 low-molecular weight proteins. The cofactor is heme b.

It is found in the mitochondrion inner membrane. Component of the ubiquinol-cytochrome c reductase complex (complex III or cytochrome b-c1 complex) that is part of the mitochondrial respiratory chain. The b-c1 complex mediates electron transfer from ubiquinol to cytochrome c. Contributes to the generation of a proton gradient across the mitochondrial membrane that is then used for ATP synthesis. The polypeptide is Cytochrome b (MT-CYB) (Python regius (Ball python)).